Consider the following 90-residue polypeptide: Sakacin-A immunity factor (90 aa).

Functionally, imparts immunity to sakacin-A to naturally sensitive host strains. The protein is Sakacin-A immunity factor (saiA) of Latilactobacillus sakei (Lactobacillus sakei).